The following is an 846-amino-acid chain: Enhancer of polycomb-like protein 1 (846 aa).

Disordered stretches follow at residues 169-204 (FNSKAEGSSGDVKSDKEQGRGMRVKGKDREKEKGDA), 391-466 (TSDE…APDA), 587-609 (EKKRPRSIDEVEEEMQEQSPKAM), 682-702 (AADAKPPPAPIFQKPPAPQPN), and 759-804 (QVQA…GVKQ). A compositionally biased stretch (basic and acidic residues) spans 180-203 (VKSDKEQGRGMRVKGKDREKEKGD). Over residues 411 to 426 (PSLSGQTPLTSGQSSS) the composition is skewed to polar residues. Over residues 432-452 (TDKDREERAQRERYDAQRNAE) the composition is skewed to basic and acidic residues. Positions 434 to 490 (KDREERAQRERYDAQRNAERSGILSGRSNAPDALKERLQALQQKTEEMLARKKEQDA) form a coiled coil. A compositionally biased stretch (pro residues) spans 686–702 (KPPPAPIFQKPPAPQPN). Residues 759 to 773 (QVQAQGQGHPQAHLQ) show a composition bias toward low complexity. Residues 774–796 (THPQGVSQPNGVNSPMPNGQQML) show a composition bias toward polar residues.

The protein belongs to the enhancer of polycomb family. As to quaternary structure, component of the NuA4 histone acetyltransferase complex.

It is found in the nucleus. In terms of biological role, component of the NuA4 histone acetyltransferase complex which is involved in transcriptional activation of selected genes principally by acetylation of nucleosomal histone H4 and H2A. The NuA4 complex is also involved in DNA repair. Involved in gene silencing by neighboring heterochromatin, blockage of the silencing spreading along the chromosome, and required for cell cycle progression through G2/M. This chain is Enhancer of polycomb-like protein 1 (EPL1), found in Cryptococcus neoformans var. neoformans serotype D (strain B-3501A) (Filobasidiella neoformans).